The sequence spans 829 residues: Probable beta-glucosidase H (829 aa).

Aspartate 225 is an active-site residue. Residues 389 to 548 (RMLSNAVIRF…DPEQMVRDAV (160 aa)) form the PA14 domain. Residues asparagine 416, asparagine 431, asparagine 473, asparagine 602, and asparagine 627 are each glycosylated (N-linked (GlcNAc...) asparagine).

The protein belongs to the glycosyl hydrolase 3 family.

The protein localises to the secreted. The enzyme catalyses Hydrolysis of terminal, non-reducing beta-D-glucosyl residues with release of beta-D-glucose.. Its pathway is glycan metabolism; cellulose degradation. Functionally, beta-glucosidases are one of a number of cellulolytic enzymes involved in the degradation of cellulosic biomass. Catalyzes the last step releasing glucose from the inhibitory cellobiose. This is Probable beta-glucosidase H (bglH) from Aspergillus clavatus (strain ATCC 1007 / CBS 513.65 / DSM 816 / NCTC 3887 / NRRL 1 / QM 1276 / 107).